The chain runs to 419 residues: Phosphatidylcholine:ceramide cholinephosphotransferase 1 (419 aa).

Residues 13 to 76 form the SAM domain; that stretch reads WSPKKVADWL…LDMIETLKME (64 aa). The residue at position 14 (S14) is a Phosphoserine. 5 helical membrane passes run 142–162, 190–210, 221–241, 282–302, and 310–330; these read FLAF…ISVV, FSIC…QWLL, FFCI…VTTL, MCGD…YLFI, and LWWY…CILL. The active site involves H291. Over 331-419 the chain is Cytoplasmic; that stretch reads AHDHYTVDVV…VKYSRLVNDT (89 aa). Active-site residues include H334 and D338.

It belongs to the sphingomyelin synthase family. As to expression, isoform 1 is widely expressed, isoform 2 shows a more narrow distribution and isoform 3 is detected only in testis and heart.

It is found in the golgi apparatus membrane. It catalyses the reaction an N-acylsphing-4-enine + a 1,2-diacyl-sn-glycero-3-phosphocholine = a sphingomyelin + a 1,2-diacyl-sn-glycerol. The enzyme catalyses 1-(9Z-octadecenoyl)-2-acyl-sn-3-glycerol + a sphingomyelin = a 1-(9Z-octadecenoyl)-2-acyl-sn-glycero-3-phosphocholine + an N-acylsphing-4-enine. It carries out the reaction N-hexadecanoylsphinganine + a 1,2-diacyl-sn-glycero-3-phosphocholine = N-hexadecanoyl-sphinganine-1-phosphocholine + a 1,2-diacyl-sn-glycerol. The catalysed reaction is N-hexadecanoyl-(4R)-hydroxysphinganine + a 1,2-diacyl-sn-glycero-3-phosphocholine = N-hexadecanoyl-(4R)-hydroxysphinganine-phosphocholine + a 1,2-diacyl-sn-glycerol. It catalyses the reaction an N-acylsphing-4-enine + a 1,2-diacyl-sn-glycero-3-phosphoethanolamine = an N-acylsphing-4-enine 1-phosphoethanolamine + a 1,2-diacyl-sn-glycerol. It functions in the pathway sphingolipid metabolism. In terms of biological role, major sphingomyelin synthase at the Golgi apparatus. Catalyzes the reversible transfer of phosphocholine moiety in sphingomyelin biosynthesis: in the forward reaction transfers phosphocholine head group of phosphatidylcholine (PC) on to ceramide (CER) to form ceramide phosphocholine (sphingomyelin, SM) and diacylglycerol (DAG) as by-product, and in the reverse reaction transfers phosphocholine from SM to DAG to form PC and CER. The direction of the reaction depends on the levels of CER and DAG in Golgi membranes. Converts the newly synthesized CER, that is transported from the endoplasmic reticulum to the trans-Golgi by the Cer transport protein (CERT), to SM. Can form a heteromeric complex with glucosylceramide synthase (GCS) increasing SMS activity and reducing glucosylceramide synthesis, a critical mechanism that controls the metabolic fate of CER in the Golgi. Does not use free phosphorylcholine or CDP-choline as donor. Can also transfer phosphoethanolamine head group of phosphatidylethanolamine (PE) on to CER to form ceramide phosphoethanolamine (CPE). Regulates receptor-mediated signal transduction via mitogenic DAG and proapoptotic CER, as well as via SM, a structural component of membrane rafts that serve as platforms for signal transduction and protein sorting. Plays a role in secretory transport via regulation of DAG pool at the Golgi apparatus and its downstream effects on PRKD1. Its function is as follows. (Microbial infection) Contributes to the brain SM production for Japanese encephalitis virus attachment and infection. The chain is Phosphatidylcholine:ceramide cholinephosphotransferase 1 (Sgms1) from Mus musculus (Mouse).